A 184-amino-acid polypeptide reads, in one-letter code: ATP synthase subunit b, chloroplastic (184 aa).

A helical membrane pass occupies residues 27 to 49 (LATNPINLSVVLGVLIFFGKGVL).

The protein belongs to the ATPase B chain family. F-type ATPases have 2 components, F(1) - the catalytic core - and F(0) - the membrane proton channel. F(1) has five subunits: alpha(3), beta(3), gamma(1), delta(1), epsilon(1). F(0) has four main subunits: a(1), b(1), b'(1) and c(10-14). The alpha and beta chains form an alternating ring which encloses part of the gamma chain. F(1) is attached to F(0) by a central stalk formed by the gamma and epsilon chains, while a peripheral stalk is formed by the delta, b and b' chains.

It is found in the plastid. The protein localises to the chloroplast thylakoid membrane. Functionally, f(1)F(0) ATP synthase produces ATP from ADP in the presence of a proton or sodium gradient. F-type ATPases consist of two structural domains, F(1) containing the extramembraneous catalytic core and F(0) containing the membrane proton channel, linked together by a central stalk and a peripheral stalk. During catalysis, ATP synthesis in the catalytic domain of F(1) is coupled via a rotary mechanism of the central stalk subunits to proton translocation. Its function is as follows. Component of the F(0) channel, it forms part of the peripheral stalk, linking F(1) to F(0). The protein is ATP synthase subunit b, chloroplastic of Buxus microphylla (Littleleaf boxwood).